Consider the following 501-residue polypeptide: Aldehyde dehydrogenase family 2 member C4 (501 aa).

Gly-245–Gly-250 contributes to the NAD(+) binding site. Glu-268 serves as the catalytic Proton acceptor. Catalysis depends on Cys-302, which acts as the Nucleophile.

The protein belongs to the aldehyde dehydrogenase family. As to quaternary structure, homotetramer.

It is found in the cytoplasm. The protein localises to the cytosol. The enzyme catalyses an aldehyde + NAD(+) + H2O = a carboxylate + NADH + 2 H(+). Functionally, involved in ferulic acid and sinapic acid biosynthesis by oxidation of conyferylaldehyde and sinapaldehyde, respectively. Can oxidize L-lactaldehyde. Possesses activity on acetaldehyde and glycolaldehyde in vitro. The polypeptide is Aldehyde dehydrogenase family 2 member C4 (ALDH2C4) (Arabidopsis thaliana (Mouse-ear cress)).